The chain runs to 370 residues: GDSL esterase/lipase At1g33811 (370 aa).

The signal sequence occupies residues 1-24 (MGILRFVLLISLNLVLFGFKTTVS). Serine 41 (nucleophile) is an active-site residue. Residues asparagine 203, asparagine 241, and asparagine 242 are each glycosylated (N-linked (GlcNAc...) asparagine). Residues aspartate 336 and histidine 339 contribute to the active site.

The protein belongs to the 'GDSL' lipolytic enzyme family.

The protein localises to the secreted. The protein is GDSL esterase/lipase At1g33811 of Arabidopsis thaliana (Mouse-ear cress).